The primary structure comprises 243 residues: DNA repair protein RecO (243 aa).

The protein belongs to the RecO family.

In terms of biological role, involved in DNA repair and RecF pathway recombination. This chain is DNA repair protein RecO, found in Vibrio parahaemolyticus serotype O3:K6 (strain RIMD 2210633).